Consider the following 122-residue polypeptide: Large ribosomal subunit protein uL14 (122 aa).

This sequence belongs to the universal ribosomal protein uL14 family. In terms of assembly, part of the 50S ribosomal subunit. Forms a cluster with proteins L3 and L19. In the 70S ribosome, L14 and L19 interact and together make contacts with the 16S rRNA in bridges B5 and B8.

Functionally, binds to 23S rRNA. Forms part of two intersubunit bridges in the 70S ribosome. This is Large ribosomal subunit protein uL14 from Shewanella frigidimarina (strain NCIMB 400).